The primary structure comprises 147 residues: Nucleoside diphosphate kinase (147 aa).

Lys-9, Phe-57, Arg-85, Thr-91, Arg-102, and Asn-112 together coordinate ATP. Residue His-115 is the Pros-phosphohistidine intermediate of the active site.

Belongs to the NDK family. Homotetramer. Requires Mg(2+) as cofactor.

Its subcellular location is the cytoplasm. It carries out the reaction a 2'-deoxyribonucleoside 5'-diphosphate + ATP = a 2'-deoxyribonucleoside 5'-triphosphate + ADP. The enzyme catalyses a ribonucleoside 5'-diphosphate + ATP = a ribonucleoside 5'-triphosphate + ADP. In terms of biological role, major role in the synthesis of nucleoside triphosphates other than ATP. The ATP gamma phosphate is transferred to the NDP beta phosphate via a ping-pong mechanism, using a phosphorylated active-site intermediate. This chain is Nucleoside diphosphate kinase, found in Kosmotoga olearia (strain ATCC BAA-1733 / DSM 21960 / TBF 19.5.1).